We begin with the raw amino-acid sequence, 95 residues long: Small ribosomal subunit protein bS20 (95 aa).

Belongs to the bacterial ribosomal protein bS20 family.

Functionally, binds directly to 16S ribosomal RNA. In Fervidobacterium nodosum (strain ATCC 35602 / DSM 5306 / Rt17-B1), this protein is Small ribosomal subunit protein bS20.